A 352-amino-acid polypeptide reads, in one-letter code: Neuronal growth regulator 1 (352 aa).

The N-terminal stretch at 1 to 35 is a signal peptide; it reads MVPLVRGAGGSHQWLAAVLLGLCCLLPAGRLAAPG. Ig-like C2-type domains follow at residues 36–132, 137–219, and 223–311; these read GDFP…VHLT, PKIF…KVTV, and PTIQ…LPLN. C58 and C116 are disulfide-bonded. N-linked (GlcNAc...) asparagine glycans are attached at residues N71 and N153. 2 disulfides stabilise this stretch: C158/C201 and C243/C295. N-linked (GlcNAc...) asparagine glycosylation is found at N273, N284, N292, and N305. The GPI-anchor amidated glycine moiety is linked to residue G322. A propeptide spans 323 to 352 (removed in mature form); the sequence is DAEVLFSCWYLVLTLSSLTSIFYLKNIILH.

It belongs to the immunoglobulin superfamily. IgLON family. Interacts with CEPU-1 and LAMP. In terms of processing, glycosylated. Expressed in embryonic retina, telencephalon, tectum, cerebellum and diencephalon (at protein level).

The protein localises to the cell membrane. May be involved in cell-adhesion. May participate in the regulation of neurite outgrowth in the developing brain. The protein is Neuronal growth regulator 1 (NEGR1) of Gallus gallus (Chicken).